The sequence spans 785 residues: 5-methyltetrahydropteroyltriglutamate--homocysteine methyltransferase (785 aa).

Residues 15–18 and lysine 121 each bind 5-methyltetrahydropteroyltri-L-glutamate; that span reads RELK. L-homocysteine contacts are provided by residues 460–462 and glutamate 513; that span reads IGS. L-methionine contacts are provided by residues 460-462 and glutamate 513; that span reads IGS. Residues 544–545 and tryptophan 590 contribute to the 5-methyltetrahydropteroyltri-L-glutamate site; that span reads RC. Aspartate 628 lines the L-homocysteine pocket. Aspartate 628 lines the L-methionine pocket. Glutamate 634 is a 5-methyltetrahydropteroyltri-L-glutamate binding site. Positions 670, 672, and 694 each coordinate Zn(2+). The Proton donor role is filled by histidine 723. Cysteine 755 is a binding site for Zn(2+).

It belongs to the vitamin-B12 independent methionine synthase family. Zn(2+) is required as a cofactor.

It catalyses the reaction 5-methyltetrahydropteroyltri-L-glutamate + L-homocysteine = tetrahydropteroyltri-L-glutamate + L-methionine. It participates in amino-acid biosynthesis; L-methionine biosynthesis via de novo pathway; L-methionine from L-homocysteine (MetE route): step 1/1. Its function is as follows. Catalyzes the transfer of a methyl group from 5-methyltetrahydrofolate to homocysteine resulting in methionine formation. The chain is 5-methyltetrahydropteroyltriglutamate--homocysteine methyltransferase from Nitratidesulfovibrio vulgaris (strain ATCC 29579 / DSM 644 / CCUG 34227 / NCIMB 8303 / VKM B-1760 / Hildenborough) (Desulfovibrio vulgaris).